A 191-amino-acid chain; its full sequence is Fe/S biogenesis protein NfuA (191 aa).

[4Fe-4S] cluster is bound by residues C149 and C152.

This sequence belongs to the NfuA family. As to quaternary structure, homodimer. It depends on [4Fe-4S] cluster as a cofactor.

In terms of biological role, involved in iron-sulfur cluster biogenesis. Binds a 4Fe-4S cluster, can transfer this cluster to apoproteins, and thereby intervenes in the maturation of Fe/S proteins. Could also act as a scaffold/chaperone for damaged Fe/S proteins. The polypeptide is Fe/S biogenesis protein NfuA (Escherichia coli O7:K1 (strain IAI39 / ExPEC)).